An 880-amino-acid chain; its full sequence is Pyruvate, phosphate dikinase (880 aa).

The interval 1–348 (MNKLIYYFGN…LYILQTRTAK (348 aa)) is N-terminal. ATP is bound at residue Arg97. The segment at 349–405 (RTAIAAINIAVQMVKEKLISKEQALMRIDPESLNQLLHTRIDYSKGLTSIAEGLPAS) is linker 1. A central region spans residues 406-503 (PGAATGIVVF…VIKQGDIITI (98 aa)). A Phosphothreonine; by PDRP1 modification is found at Thr458. Residue His460 is the Tele-phosphohistidine intermediate of the active site. Residues 504–538 (DGGSGKIFLGEMPLIQPTFSEESKLILDWADEISS) are linker 2. The interval 539-880 (LKVRANAETV…AAQAKIKQGS (342 aa)) is C-terminal. 7 residues coordinate substrate: Arg566, Arg622, Glu750, Gly771, Thr772, Asn773, and Asp774. Glu750 lines the Mg(2+) pocket. Mg(2+) is bound at residue Asp774. Cys836 serves as the catalytic Proton donor.

This sequence belongs to the PEP-utilizing enzyme family. Homodimer. Mg(2+) serves as cofactor. In terms of processing, phosphorylation of Thr-458 in the dark inactivates the enzyme. Dephosphorylation upon light stimulation reactivates the enzyme.

The enzyme catalyses pyruvate + phosphate + ATP = phosphoenolpyruvate + AMP + diphosphate + H(+). Activated by light-induced dephosphorylation. Inhibited by dark-induced phosphorylation. Both reactions are catalyzed by PDRP1. Its function is as follows. Catalyzes the reversible phosphorylation of pyruvate and phosphate. This Rickettsia prowazekii (strain Madrid E) protein is Pyruvate, phosphate dikinase (ppdK).